We begin with the raw amino-acid sequence, 1807 residues long: Integrin beta-4 (1807 aa).

Positions 1 to 27 are cleaved as a signal peptide; it reads MAGLCSSPWVKLLLAVVLSAGLPGNMA. Residues 28-713 lie on the Extracellular side of the membrane; that stretch reads NRCKKAQVKS…KKKDCLPAPS (686 aa). The PSI domain maps to 29-73; that stretch reads RCKKAQVKSCTECIRVDKSCAYCTDELFKERRCNTQADVLAAGCR. Cystine bridges form between Cys30–Cys48, Cys38–Cys456, Cys41–Cys61, Cys51–Cys72, Cys245–Cys288, Cys458–Cys477, Cys469–Cys480, and Cys482–Cys491. The VWFA domain maps to 131–340; sequence DLYILMDFSN…SYYEKLHKYF (210 aa). Positions 139 and 141 each coordinate Mg(2+). Ca(2+)-binding residues include Ser141, Asp144, Asp145, and Asp176. The involved in NRG1- and IGF1-binding stretch occupies residues 194 to 199; it reads WPNSDP. Residues Asn228, Asp230, Pro232, and Glu233 each coordinate Ca(2+). Mg(2+) is bound at residue Glu233. Asn327 carries N-linked (GlcNAc...) asparagine glycosylation. Glu350 contributes to the Ca(2+) binding site. I-EGF domains are found at residues 458 to 492, 493 to 538, 539 to 575, and 576 to 617; these read CELQ…KTCN, CSTG…HFCE, YDNF…RSCD, and CPLS…TTCE. Asn492 carries an N-linked (GlcNAc...) asparagine glycan. 11 cysteine pairs are disulfide-bonded: Cys493–Cys521, Cys504–Cys519, Cys513–Cys524, Cys526–Cys537, Cys544–Cys558, Cys552–Cys563, Cys565–Cys574, Cys576–Cys599, Cys583–Cys597, Cys591–Cys602, and Cys604–Cys616. An N-linked (GlcNAc...) asparagine glycan is attached at Asn580. A glycan (N-linked (GlcNAc...) asparagine) is linked at Asn619. 4 cysteine pairs are disulfide-bonded: Cys628-Cys673, Cys634-Cys653, Cys637-Cys650, and Cys682-Cys708. Asn697 is a glycosylation site (N-linked (GlcNAc...) asparagine). A helical transmembrane segment spans residues 714 to 734; the sequence is WWLIPLLIFLLLLLVLLLLLC. The interval 734–751 is palmitoylated on several cysteines; that stretch reads CWKYCACCKACLGLLPCC. Topologically, residues 735 to 1807 are cytoplasmic; the sequence is WKYCACCKAC…THMDQQFFQT (1073 aa). Ser773, Ser1071, and Ser1121 each carry phosphoserine. One can recognise a Calx-beta domain in the interval 981–1086; the sequence is VNITIIKEQA…QVRRFQVQLS (106 aa). Positions 1119 to 1141 are disordered; the sequence is SASPPLPRGDLGAPQNPNAKAAG. Fibronectin type-III domains lie at 1131–1220 and 1224–1323; these read APQN…THQE and EPGR…TQPK. Phosphoserine is present on residues Ser1386, Ser1389, and Ser1405. The residue at position 1418 (Thr1418) is a Phosphothreonine. The residue at position 1425 (Ser1425) is a Phosphoserine. The residue at position 1514 (Thr1514) is a Phosphothreonine. Fibronectin type-III domains are found at residues 1514-1609 and 1627-1723; these read TPTR…VHPQ and APGP…SQDG. Ser1776 carries the phosphoserine modification.

It belongs to the integrin beta chain family. As to quaternary structure, heterodimer of an alpha and a beta subunit. Beta-4 associates with alpha-6. Interacts (via cytoplasmic region) with COL17A1 (via cytoplasmic region). Interacts (via cytoplasmic region) with DST isoform 3 (via N-terminus). Interacts (via cytoplasmic domain) with DST (via N-terminus). Interacts with RAC1. ITGA6:ITGB4 is found in a ternary complex with NRG1 and ERBB3. ITGA6:ITGB4 is found in a ternary complex with IGF1 and IGF1R. ITGA6:ITGB4 interacts with IGF2. Interacts with TMEM268; this interaction prevents ITGB4 degradation. In terms of processing, palmitoylated by DHHC3 at several cysteines of the membrane-proximal region, enhancing stability and cell surface expression. Palmitoylation also promotes secondary association with tertaspanins.

Its subcellular location is the cell membrane. The protein resides in the cell junction. It is found in the hemidesmosome. In terms of biological role, integrin alpha-6/beta-4 is a receptor for laminin. It plays a critical structural role in the hemidesmosome of epithelial cells. Is required for the regulation of keratinocyte polarity and motility. ITGA6:ITGB4 binds to NRG1 (via EGF domain) and this binding is essential for NRG1-ERBB signaling. ITGA6:ITGB4 binds to IGF1 and this binding is essential for IGF1 signaling. ITGA6:ITGB4 binds to IGF2 and this binding is essential for IGF2 signaling. The polypeptide is Integrin beta-4 (Itgb4) (Rattus norvegicus (Rat)).